The primary structure comprises 132 residues: Glycine cleavage system H protein (132 aa).

Residues 24 to 106 enclose the Lipoyl-binding domain; that stretch reads RVRVGITDYA…YGAGWLFELE (83 aa). Lys-65 carries the N6-lipoyllysine modification.

The protein belongs to the GcvH family. In terms of assembly, the glycine cleavage system is composed of four proteins: P, T, L and H. Requires (R)-lipoate as cofactor.

In terms of biological role, the glycine cleavage system catalyzes the degradation of glycine. The H protein shuttles the methylamine group of glycine from the P protein to the T protein. This Nocardia farcinica (strain IFM 10152) protein is Glycine cleavage system H protein.